The sequence spans 478 residues: Protein trichome birefringence-like 20 (478 aa).

Residues 10 to 30 (IGLVIFPLILLTIAPILYLFF) traverse the membrane as a helical; Signal-anchor for type II membrane protein segment. The span at 50–68 (SSAISSPSRYNHSSSSSDS) shows a compositional bias: low complexity. The segment at 50 to 125 (SSAISSPSRY…KEHRRKKRKR (76 aa)) is disordered. A compositionally biased stretch (polar residues) spans 92-110 (SSSLHNNDRLSISSSNGHH). Residues 112 to 125 (VTPKKEHRRKKRKR) show a composition bias toward basic residues. The GDS motif motif lies at 200–202 (GDS). The DCXHWCLPGXXDXWN motif motif lies at 447 to 461 (DCVHWCLPGPIDSWN).

The protein belongs to the PC-esterase family. TBL subfamily.

It is found in the membrane. May act as a bridging protein that binds pectin and other cell wall polysaccharides. Probably involved in maintaining esterification of pectins. May be involved in the specific O-acetylation of cell wall polymers. The polypeptide is Protein trichome birefringence-like 20 (TBL20) (Arabidopsis thaliana (Mouse-ear cress)).